Here is a 575-residue protein sequence, read N- to C-terminus: DNA-directed RNA polymerase subunit beta' (575 aa).

Zn(2+) is bound by residues Cys-64, Cys-66, Cys-85, and Cys-88. 3 residues coordinate Mg(2+): Asp-440, Asp-442, and Asp-444.

This sequence belongs to the RNA polymerase beta' chain family. RpoC1 subfamily. In plastids the minimal PEP RNA polymerase catalytic core is composed of four subunits: alpha, beta, beta', and beta''. When a (nuclear-encoded) sigma factor is associated with the core the holoenzyme is formed, which can initiate transcription. The cofactor is Mg(2+). It depends on Zn(2+) as a cofactor.

The protein resides in the plastid. It catalyses the reaction RNA(n) + a ribonucleoside 5'-triphosphate = RNA(n+1) + diphosphate. Functionally, DNA-dependent RNA polymerase catalyzes the transcription of DNA into RNA using the four ribonucleoside triphosphates as substrates. In Euglena longa (Euglenophycean alga), this protein is DNA-directed RNA polymerase subunit beta'.